The following is a 464-amino-acid chain: Peptidase inhibitor 16 (464 aa).

A signal peptide spans 1 to 27; it reads MHGSGSLLACLLPPLLLLGAAPGPAGA. One can recognise an SCP domain in the interval 37–165; that stretch reads VELHNLYRTQ…TNIHLLVCNY (129 aa). The N-linked (GlcNAc...) asparagine glycan is linked to Asn-114. 4 disordered regions span residues 208 to 241, 260 to 281, 304 to 347, and 386 to 412; these read DLSS…TEPP, VETK…TKTP, PATL…LMGT, and TTLK…ANAV. Residues 311 to 325 are compositionally biased toward basic and acidic residues; that stretch reads STHDPIPKSADKEAS. Residues 395–411 are compositionally biased toward low complexity; the sequence is SSKSLSNSPSASATANA.

The protein belongs to the CRISP family. In terms of assembly, interacts with PSP94/MSMB. N-glycosylated.

It is found in the secreted. Functionally, may inhibit cardiomyocyte growth. The sequence is that of Peptidase inhibitor 16 (PI16) from Bos taurus (Bovine).